Consider the following 230-residue polypeptide: Demethylluteothin O-methyltransferase (230 aa).

The protein belongs to the methyltransferase superfamily.

The enzyme catalyses demethylluteothin + S-adenosyl-L-methionine = luteothin + S-adenosyl-L-homocysteine. It participates in antibiotic biosynthesis. Its pathway is polyketide biosynthesis. Its function is as follows. Methyltransferase involved in the biosynthesis of the antibiotic aureothin, a nitroaryl polyketide metabolite with antifungal, cytotoxic and insecticidal activities. Catalyzes the methylation of demethylluteothin to luteothin (also called deoxyaureothin). Is specific for its gamma-pyrone substrate, and does not act on the alpha-pyrone isomer. This chain is Demethylluteothin O-methyltransferase, found in Streptomyces thioluteus.